The chain runs to 74 residues: Protein kish-B (74 aa).

An N-terminal signal peptide occupies residues 1-22 (MTNVYSLDGLLVFALLFVCTCA). Residues 23-52 (YFRKVPRLRSWLLSEKKGVWGVFYKAAVIG) are Extracellular-facing. The chain crosses the membrane as a helical span at residues 53–73 (SRLHLAVSISCIAMAFYVLFI). Lys-74 is a topological domain (cytoplasmic).

It belongs to the KISH family.

The protein localises to the golgi apparatus membrane. Involved in the early part of the secretory pathway. The sequence is that of Protein kish-B (tmem167b) from Xenopus laevis (African clawed frog).